We begin with the raw amino-acid sequence, 284 residues long: 4-diphosphocytidyl-2-C-methyl-D-erythritol kinase (284 aa).

Lys14 is an active-site residue. 98–108 (PMGGGLGGGSS) lines the ATP pocket. Asp140 is a catalytic residue.

The protein belongs to the GHMP kinase family. IspE subfamily.

It catalyses the reaction 4-CDP-2-C-methyl-D-erythritol + ATP = 4-CDP-2-C-methyl-D-erythritol 2-phosphate + ADP + H(+). The protein operates within isoprenoid biosynthesis; isopentenyl diphosphate biosynthesis via DXP pathway; isopentenyl diphosphate from 1-deoxy-D-xylulose 5-phosphate: step 3/6. Its function is as follows. Catalyzes the phosphorylation of the position 2 hydroxy group of 4-diphosphocytidyl-2C-methyl-D-erythritol. This chain is 4-diphosphocytidyl-2-C-methyl-D-erythritol kinase, found in Shewanella pealeana (strain ATCC 700345 / ANG-SQ1).